The primary structure comprises 352 residues: Chorismate synthase (352 aa).

R48 provides a ligand contact to NADP(+). FMN is bound by residues 125–127 (RSS), 237–238 (NA), G278, 293–297 (KPTSS), and R319.

The protein belongs to the chorismate synthase family. Homotetramer. Requires FMNH2 as cofactor.

It catalyses the reaction 5-O-(1-carboxyvinyl)-3-phosphoshikimate = chorismate + phosphate. It functions in the pathway metabolic intermediate biosynthesis; chorismate biosynthesis; chorismate from D-erythrose 4-phosphate and phosphoenolpyruvate: step 7/7. Functionally, catalyzes the anti-1,4-elimination of the C-3 phosphate and the C-6 proR hydrogen from 5-enolpyruvylshikimate-3-phosphate (EPSP) to yield chorismate, which is the branch point compound that serves as the starting substrate for the three terminal pathways of aromatic amino acid biosynthesis. This reaction introduces a second double bond into the aromatic ring system. This chain is Chorismate synthase, found in Francisella tularensis subsp. holarctica (strain FTNF002-00 / FTA).